The following is a 327-amino-acid chain: Polyadenylate-binding protein-interacting protein 9 (327 aa).

Residues 59–69 carry the PAM2-like motif; it reads KLNPLAKEFFP. The segment covering 97 to 113 has biased composition (basic and acidic residues); it reads KQSGEEFDLDAKKDDNT. Residues 97–132 are disordered; it reads KQSGEEFDLDAKKDDNTRKRRNYSQGRRRLTGRISK. Positions 114 to 125 match the Bipartite nuclear localization signal motif; that stretch reads RKRRNYSQGRRR. Residues 114-127 show a composition bias toward basic residues; that stretch reads RKRRNYSQGRRRLT. RRM domains lie at 141-216 and 238-314; these read RTVY…PSKT and RTIY…PSKT. The disordered stretch occupies residues 308–327; sequence RVSPSKTPVRPRITRPPSTN.

The protein localises to the nucleus. This chain is Polyadenylate-binding protein-interacting protein 9 (CID9), found in Arabidopsis thaliana (Mouse-ear cress).